The sequence spans 508 residues: Proline--tRNA ligase 2 (508 aa).

It belongs to the class-II aminoacyl-tRNA synthetase family. ProS type 3 subfamily. In terms of assembly, homodimer.

The protein resides in the cytoplasm. It carries out the reaction tRNA(Pro) + L-proline + ATP = L-prolyl-tRNA(Pro) + AMP + diphosphate. Functionally, catalyzes the attachment of proline to tRNA(Pro) in a two-step reaction: proline is first activated by ATP to form Pro-AMP and then transferred to the acceptor end of tRNA(Pro). The protein is Proline--tRNA ligase 2 of Bacillus anthracis.